The chain runs to 177 residues: Large ribosomal subunit protein uL6 (177 aa).

The protein belongs to the universal ribosomal protein uL6 family. As to quaternary structure, part of the 50S ribosomal subunit.

In terms of biological role, this protein binds to the 23S rRNA, and is important in its secondary structure. It is located near the subunit interface in the base of the L7/L12 stalk, and near the tRNA binding site of the peptidyltransferase center. This is Large ribosomal subunit protein uL6 from Pseudomonas fluorescens (strain SBW25).